We begin with the raw amino-acid sequence, 46 residues long: Large ribosomal subunit protein bL34c (46 aa).

This sequence belongs to the bacterial ribosomal protein bL34 family.

It localises to the plastid. The protein resides in the chloroplast. The sequence is that of Large ribosomal subunit protein bL34c from Pyropia yezoensis (Susabi-nori).